Reading from the N-terminus, the 271-residue chain is 3-methyl-2-oxobutanoate hydroxymethyltransferase (271 aa).

The Mg(2+) site is built by Asp-42 and Asp-86. 3-methyl-2-oxobutanoate-binding positions include Asp-42–Ser-43, Asp-86, and Lys-116. Glu-118 serves as a coordination point for Mg(2+). Glu-185 functions as the Proton acceptor in the catalytic mechanism.

This sequence belongs to the PanB family. As to quaternary structure, homodecamer; pentamer of dimers. The cofactor is Mg(2+).

The protein resides in the cytoplasm. It carries out the reaction 3-methyl-2-oxobutanoate + (6R)-5,10-methylene-5,6,7,8-tetrahydrofolate + H2O = 2-dehydropantoate + (6S)-5,6,7,8-tetrahydrofolate. The protein operates within cofactor biosynthesis; (R)-pantothenate biosynthesis; (R)-pantoate from 3-methyl-2-oxobutanoate: step 1/2. In terms of biological role, catalyzes the reversible reaction in which hydroxymethyl group from 5,10-methylenetetrahydrofolate is transferred onto alpha-ketoisovalerate to form ketopantoate. This is 3-methyl-2-oxobutanoate hydroxymethyltransferase from Synechococcus sp. (strain CC9605).